Consider the following 37-residue polypeptide: Large ribosomal subunit protein bL36c (37 aa).

Belongs to the bacterial ribosomal protein bL36 family.

It localises to the plastid. Its subcellular location is the chloroplast. The sequence is that of Large ribosomal subunit protein bL36c from Tetradesmus obliquus (Green alga).